A 491-amino-acid chain; its full sequence is Cytochrome P450 2F1 (491 aa).

Cys436 lines the heme pocket.

The protein belongs to the cytochrome P450 family. The cofactor is heme. As to expression, expressed in lung. Rarely detected in liver and placenta.

It localises to the endoplasmic reticulum membrane. Its subcellular location is the microsome membrane. It carries out the reaction an organic molecule + reduced [NADPH--hemoprotein reductase] + O2 = an alcohol + oxidized [NADPH--hemoprotein reductase] + H2O + H(+). In terms of biological role, may be involved in the metabolism of various pneumotoxicants including naphthalene. Is able to dealkylate ethoxycoumarin, propoxycoumarin, and pentoxyresorufin but possesses no activity toward ethoxyresorufin and only trace dearylation activity toward benzyloxyresorufin. Bioactivates 3-methylindole (3MI) by dehydrogenation to the putative electrophile 3-methylene-indolenine. The protein is Cytochrome P450 2F1 (CYP2F1) of Homo sapiens (Human).